A 212-amino-acid chain; its full sequence is tRNA (guanine-N(7)-)-methyltransferase (212 aa).

Glu44, Asp69, Asp96, and Asp118 together coordinate S-adenosyl-L-methionine. Asp118 is an active-site residue. Position 122 (Lys122) interacts with substrate. Positions 124-129 are interaction with RNA; that stretch reads RHEKRR. Substrate is bound by residues Asp154 and 191 to 194; that span reads TEYE.

This sequence belongs to the class I-like SAM-binding methyltransferase superfamily. TrmB family.

The enzyme catalyses guanosine(46) in tRNA + S-adenosyl-L-methionine = N(7)-methylguanosine(46) in tRNA + S-adenosyl-L-homocysteine. Its pathway is tRNA modification; N(7)-methylguanine-tRNA biosynthesis. Functionally, catalyzes the formation of N(7)-methylguanine at position 46 (m7G46) in tRNA. In Streptococcus suis (strain 05ZYH33), this protein is tRNA (guanine-N(7)-)-methyltransferase.